A 110-amino-acid polypeptide reads, in one-letter code: Glutaredoxin-2 (110 aa).

A Glutaredoxin domain is found at 6 to 106 (KAFVEKAISN…KMIAELKENK (101 aa)). Cys-26 and Cys-29 are disulfide-bonded.

The protein belongs to the glutaredoxin family.

In terms of biological role, the disulfide bond functions as an electron carrier in the glutathione-dependent synthesis of deoxyribonucleotides by the enzyme ribonucleotide reductase. In addition, it is also involved in reducing some disulfides in a coupled system with glutathione reductase. Thioltransferase catalyzes cellular thiol-disulfide transhydrogenation reactions. It transfers reducing equivalents to cytosolic protein and nonprotein disulfides. The polypeptide is Glutaredoxin-2 (grx2) (Schizosaccharomyces pombe (strain 972 / ATCC 24843) (Fission yeast)).